Here is a 1176-residue protein sequence, read N- to C-terminus: Histidine kinase 2 (1176 aa).

At 1–29 (MSITCELLNLTSKKAKKSSSSDKKWLKKP) the chain is on the cytoplasmic side. A helical membrane pass occupies residues 30–50 (LFFLILCGSLVIVLVMFLRLG). The Extracellular portion of the chain corresponds to 51–174 (RSQKEETDSC…LEQGLSSYLR (124 aa)). A helical membrane pass occupies residues 175-195 (NAWWCLILGVLVCHKIYVSHS). The Cytoplasmic portion of the chain corresponds to 196–232 (KARGERKEKVHLQEALAPKKQQQRAQTSSRGAGRWRK). The chain crosses the membrane as a helical span at residues 233–253 (NILLLGILGGVSFSVWWFWDT). Residues 254–536 (NEEIIMKRRE…CRFKHKLPIP (283 aa)) are Extracellular-facing. A CHASE domain is found at 302 to 526 (IPSAIDQRTF…GDPSRNHEMH (225 aa)). A helical transmembrane segment spans residues 537 to 557 (WTAITPSILVLVITFLVGYIL). Residues 558 to 1176 (YEAINRIATV…TAVARFFEPC (619 aa)) lie on the Cytoplasmic side of the membrane. The Histidine kinase domain maps to 594-867 (TVSHEIRTPM…TFSFTGVFGK (274 aa)). H597 bears the Phosphohistidine; by autocatalysis mark. Response regulatory domains lie at 891–1013 (RALV…QETL) and 1036–1173 (QILV…ARFF). Residues D942 and D1086 each carry the 4-aspartylphosphate modification.

In terms of assembly, self-interacts. Interacts with AHK3, AHP1, AHP2, AHP3, AHP5, ATAF2, AT2S3, BETAA-AD, CYP20-2, DRP1A, HIR1, HIR2, PI4KB1, PI4KG5 and At4g12060. Autophosphorylated predominantly on His residues. Activation probably requires a transfer of a phosphate group between a His in the transmitter domain and an Asp of the receiver domain. In terms of tissue distribution, expressed in roots, leaves and flowers, mostly in the vascular tissues. Present in seedlings.

The protein localises to the endoplasmic reticulum membrane. The enzyme catalyses ATP + protein L-histidine = ADP + protein N-phospho-L-histidine.. Activated by cytokinins to initiate phosphorelay signaling. Functionally, cytokinins (CK) receptor related to bacterial two-component regulators. Functions as a histidine kinase and transmits the stress signal to a downstream MAPK cascade. This protein undergoes an ATP-dependent autophosphorylation at a conserved histidine residue in the kinase core, and a phosphoryl group is then transferred to a conserved aspartate residue in the receiver domain. In the presence of cytokinin, feeds phosphate to phosphorelay-integrating histidine phosphotransfer protein (HPt) and activates subsequent cascade. Involved in meristems establishment in seedlings. Redundant negative regulator of drought and salt stress responses and abscisic acid (ABA) signaling. Together with AHK3, plays a negative regulatory role in cold stress signaling via inhibition of ABA response, occurring independently of the cold acclimation pathway. Redundant positive regulator of cytokinin signaling that regulates many developmental processes including seed germination, cell division, seed size, chlorophyll retention during leaf senescence, root repression and shoot promotion. Involved in alkamides (e.g. N-isobutyl decanamide) and N-acylethanolamides (NAE) signaling that control meristematic activity and differentiation processes during plant development. Contributes to vascular bundle formation and secondary growth in a cytokinin-dependent manner, probably by promoting the maintenance of mitotic activity and/or identity of procambial cells. Together with AHK4, required for growth and reproduction promotion stimulated by the endophytic fungus Piriformospora indica in a trans-zeatin-dependent manner. Required by the cytokinin-dependent flower development regulation pathway. The chain is Histidine kinase 2 (AHK2) from Arabidopsis thaliana (Mouse-ear cress).